Reading from the N-terminus, the 136-residue chain is Galectin-7 (136 aa).

Positions 6 to 136 constitute a Galectin domain; the sequence is HKSSLPEGIR…DVQLDSVRIF (131 aa). Residue 70–76 coordinates a beta-D-galactoside; sequence WGREERG.

In terms of assembly, monomer. As to expression, mainly expressed in stratified squamous epithelium.

Its subcellular location is the cytoplasm. It localises to the nucleus. The protein resides in the secreted. Could be involved in cell-cell and/or cell-matrix interactions necessary for normal growth control. Pro-apoptotic protein that functions intracellularly upstream of JNK activation and cytochrome c release. The polypeptide is Galectin-7 (LGALS7) (Homo sapiens (Human)).